The following is a 215-amino-acid chain: Large ribosomal subunit protein bL25 (215 aa).

The segment covering 1–10 (MAKSASNQLR) has biased composition (polar residues). Disordered stretches follow at residues 1–25 (MAKS…SRRA) and 187–215 (ELEG…GESE).

This sequence belongs to the bacterial ribosomal protein bL25 family. CTC subfamily. As to quaternary structure, part of the 50S ribosomal subunit; part of the 5S rRNA/L5/L18/L25 subcomplex. Contacts the 5S rRNA. Binds to the 5S rRNA independently of L5 and L18.

Its function is as follows. This is one of the proteins that binds to the 5S RNA in the ribosome where it forms part of the central protuberance. The polypeptide is Large ribosomal subunit protein bL25 (Mycobacterium bovis (strain ATCC BAA-935 / AF2122/97)).